The sequence spans 395 residues: Putative nickel insertion protein (395 aa).

This sequence belongs to the LarC family.

In Archaeoglobus fulgidus (strain ATCC 49558 / DSM 4304 / JCM 9628 / NBRC 100126 / VC-16), this protein is Putative nickel insertion protein.